A 137-amino-acid chain; its full sequence is uncharacterized protein (137 aa).

The region spanning 4–118 (YEGNCLCKAI…CIDDKPDCYD (115 aa)) is the CENP-V/GFA domain. The Zn(2+) site is built by C8, C10, C27, C29, C32, C71, and C74.

It belongs to the Gfa family. Zn(2+) is required as a cofactor.

Its subcellular location is the cytoplasm. It is found in the nucleus. This is an uncharacterized protein from Schizosaccharomyces pombe (strain 972 / ATCC 24843) (Fission yeast).